We begin with the raw amino-acid sequence, 194 residues long: Large ribosomal subunit protein uL5 (194 aa).

Belongs to the universal ribosomal protein uL5 family. Part of the 50S ribosomal subunit; part of the 5S rRNA/L5/L18/L25 subcomplex. Contacts the 5S rRNA and the P site tRNA. Forms a bridge to the 30S subunit in the 70S ribosome.

Functionally, this is one of the proteins that bind and probably mediate the attachment of the 5S RNA into the large ribosomal subunit, where it forms part of the central protuberance. In the 70S ribosome it contacts protein S13 of the 30S subunit (bridge B1b), connecting the 2 subunits; this bridge is implicated in subunit movement. Contacts the P site tRNA; the 5S rRNA and some of its associated proteins might help stabilize positioning of ribosome-bound tRNAs. This chain is Large ribosomal subunit protein uL5, found in Frankia alni (strain DSM 45986 / CECT 9034 / ACN14a).